A 449-amino-acid polypeptide reads, in one-letter code: uncharacterized protein (449 aa).

Serine 420 carries the phosphoserine modification.

It belongs to the NAD kinase family.

Its subcellular location is the cytoplasm. It is found in the nucleus. This is an uncharacterized protein from Schizosaccharomyces pombe (strain 972 / ATCC 24843) (Fission yeast).